The sequence spans 274 residues: UPF0758 protein RHECIAT_CH0001935 (274 aa).

The tract at residues 1-57 is disordered; the sequence is MAKRPAATSSNDELPFATEEPVADERSFFGGRPQNPTAPNARAALPASLSGPEHYHG. The 123-residue stretch at 152 to 274 folds into the MPN domain; sequence VLSSWSSVIQ…HVSLKGLKLI (123 aa). Residues His-223, His-225, and Asp-236 each coordinate Zn(2+). Residues 223-236 carry the JAMM motif motif; sequence HNHPSGDPTPSRAD.

This sequence belongs to the UPF0758 family.

This Rhizobium etli (strain CIAT 652) protein is UPF0758 protein RHECIAT_CH0001935.